Reading from the N-terminus, the 594-residue chain is Arginine--tRNA ligase (594 aa).

The 'HIGH' region signature appears at 139–149 (ANPTGPLHVGH).

It belongs to the class-I aminoacyl-tRNA synthetase family. In terms of assembly, monomer.

The protein localises to the cytoplasm. The catalysed reaction is tRNA(Arg) + L-arginine + ATP = L-arginyl-tRNA(Arg) + AMP + diphosphate. The chain is Arginine--tRNA ligase from Burkholderia pseudomallei (strain 1106a).